The primary structure comprises 224 residues: Putative homeobox protein R749 (224 aa).

The tract at residues 139–162 is disordered; the sequence is KTKTIKKSTSEKKTSPKKKTTSQQ. The segment at residues 161-220 is a DNA-binding region (homeobox); sequence QQIKRVRLSDEERNILESQYSKNNFPSPEIRDELAKKIGKTPRQVQIWFQNKRCKDRKNL.

It is found in the host nucleus. The chain is Putative homeobox protein R749 from Acanthamoeba polyphaga mimivirus (APMV).